A 260-amino-acid chain; its full sequence is Thiamine thiazole synthase (260 aa).

Residues alanine 36, 55–56, glycine 63, and 154–156 each bind NAD(+); these read EQ and HVD. Fe cation contacts are provided by aspartate 156 and histidine 171. Residue methionine 224 participates in NAD(+) binding. Arginine 234 provides a ligand contact to glycine.

This sequence belongs to the THI4 family. In terms of assembly, homooctamer; tetramer of dimers. Fe(2+) serves as cofactor.

It catalyses the reaction hydrogen sulfide + glycine + NAD(+) = ADP-5-ethyl-4-methylthiazole-2-carboxylate + nicotinamide + 3 H2O + H(+). Its pathway is cofactor biosynthesis; thiamine diphosphate biosynthesis. Its function is as follows. Involved in the biosynthesis of the thiazole moiety of thiamine. Catalyzes the conversion of NAD and glycine to adenosine diphosphate 5-(2-hydroxyethyl)-4-methylthiazole-2-carboxylate (ADT), an adenylated thiazole intermediate, using free sulfide as a source of sulfur. This Methanosarcina barkeri (strain Fusaro / DSM 804) protein is Thiamine thiazole synthase.